Reading from the N-terminus, the 351-residue chain is MKKQIEQLSAYEPGLSPRALKENYGIKGELHKLASNENLYGPSPKVKEAIQAHLDELQYYPETGSPLIKEAISKHLNIDPARILFGAGLDEVILMISRAVLTPGDKIVTSEMTFGQYYHNAIVESANVVQVPLQNGEFDLDGILSEIDNDTKLVWLCNPNNPTGRYFTHDALRNFLERVPSHIPVIVDEAYVEFATAKDFPDTLALQQEFENAFLLRTFSKAYGLAGMRIGYVIAAKEAIEKYNIIRPPFNVGRLSEYAALAALEDQEYLASIRERNAEEREKFFELSQSDHFYPSQTNFVFVKTDKPHELYEALLNVGCITREFPNGVRITIGFPEQNAKMREVLAQFTL.

Lysine 221 is subject to N6-(pyridoxal phosphate)lysine.

Belongs to the class-II pyridoxal-phosphate-dependent aminotransferase family. Histidinol-phosphate aminotransferase subfamily. Homodimer. Pyridoxal 5'-phosphate serves as cofactor.

The catalysed reaction is L-histidinol phosphate + 2-oxoglutarate = 3-(imidazol-4-yl)-2-oxopropyl phosphate + L-glutamate. It participates in amino-acid biosynthesis; L-histidine biosynthesis; L-histidine from 5-phospho-alpha-D-ribose 1-diphosphate: step 7/9. This is Histidinol-phosphate aminotransferase from Staphylococcus saprophyticus subsp. saprophyticus (strain ATCC 15305 / DSM 20229 / NCIMB 8711 / NCTC 7292 / S-41).